Reading from the N-terminus, the 137-residue chain is Large ribosomal subunit protein uL16c (137 aa).

Belongs to the universal ribosomal protein uL16 family. In terms of assembly, part of the 50S ribosomal subunit.

It localises to the plastid. The protein is Large ribosomal subunit protein uL16c of Aneura mirabilis (Parasitic liverwort).